A 377-amino-acid chain; its full sequence is Nitric oxide reductase FlRd-NAD(+) reductase (377 aa).

Belongs to the FAD-dependent oxidoreductase family. FAD is required as a cofactor.

The protein localises to the cytoplasm. It catalyses the reaction 2 reduced [nitric oxide reductase rubredoxin domain] + NAD(+) + H(+) = 2 oxidized [nitric oxide reductase rubredoxin domain] + NADH. The protein operates within nitrogen metabolism; nitric oxide reduction. In terms of biological role, one of at least two accessory proteins for anaerobic nitric oxide (NO) reductase. Reduces the rubredoxin moiety of NO reductase. This is Nitric oxide reductase FlRd-NAD(+) reductase from Shigella dysenteriae serotype 1 (strain Sd197).